A 525-amino-acid polypeptide reads, in one-letter code: NGFI-A-binding protein 2 (525 aa).

The interval 1 to 22 (MHRAPSPTAEQPPGGGDSARRT) is disordered. At Ser6 the chain carries Phosphoserine. The segment at 35-113 (ALPRTLGELQ…REWATNPGLF (79 aa)) is NCD1. Residues 135–237 (GTRKGSMSNG…GGTGGGPDRL (103 aa)) form a disordered region. Phosphoserine is present on residues Ser157, Ser159, Ser162, and Ser171. The segment covering 212–234 (AGGGVPEGTGAGGLAAGGTGGGP) has biased composition (gly residues). The NCD2 stretch occupies residues 267 to 356 (LLKLNKKLAR…SRQVARESTY (90 aa)). Residues 353–384 (ESTYLSSLKGSRLHPEELGGPPLKKLKQEVGE) are necessary for nuclear localization. Residue Lys379 forms a Glycyl lysine isopeptide (Lys-Gly) (interchain with G-Cter in SUMO1) linkage. The interval 380-416 (QEVGEQSHPEIQQPPPGPESYVPPYRPSLEEDSASLS) is disordered. Residue Ser479 is modified to Phosphoserine. The segment at 502 to 525 (PGPHPALVEGRRSSVKVEAEASRQ) is disordered. A compositionally biased stretch (basic and acidic residues) spans 510–525 (EGRRSSVKVEAEASRQ). Lys517 participates in a covalent cross-link: Glycyl lysine isopeptide (Lys-Gly) (interchain with G-Cter in SUMO1); alternate. Residue Lys517 forms a Glycyl lysine isopeptide (Lys-Gly) (interchain with G-Cter in SUMO2); alternate linkage.

It belongs to the NAB family. As to quaternary structure, homomultimers may associate with EGR1 bound to DNA. In terms of processing, sumoylation by EGR2 represses EGR2 transcriptional activity in hindbrain. In terms of tissue distribution, widely expressed at low levels. Highly expressed in melanoma cell lines.

It localises to the nucleus. Acts as a transcriptional repressor for zinc finger transcription factors EGR1 and EGR2. Isoform 2 lacks repression ability. The polypeptide is NGFI-A-binding protein 2 (NAB2) (Homo sapiens (Human)).